The following is a 971-amino-acid chain: Translation initiation factor IF-2 (971 aa).

Residues 49–63 show a composition bias toward basic and acidic residues; it reads HLRKSHGATDGDKRK. Disordered stretches follow at residues 49-86 and 101-385; these read HLRK…ARTI and DVAE…APTE. Positions 105–114 are enriched in low complexity; that stretch reads GAEQGQAQVA. Positions 121–177 are enriched in basic and acidic residues; the sequence is ELKRREEEARREAELLEKQAQELRERQERLEREEAERRAREEAAEAQRRRAEEEAAA. The span at 178-209 shows a compositional bias: low complexity; it reads KRAAAAAVEAQQVAAQQAAEAQQETAGAQSAQ. The segment covering 210-261 has biased composition (basic and acidic residues); it reads DEARAAAERAAQREAAKKAEDAAREAADKTRAEQEEIRKRREAAEAEARAIR. Over residues 277–286 the composition is skewed to pro residues; it reads PPKPVEPPKP. A compositionally biased stretch (low complexity) spans 298–325; sequence KPAGASAARPAVKKPAGAAPATTAPAGA. Residues 355-368 are compositionally biased toward gly residues; sequence SSGGVDRGWRGGPK. The tr-type G domain occupies 471-640; it reads PRPPVVTVMG…LLQAEVLELK (170 aa). Positions 480–487 are G1; the sequence is GHVDHGKT. Residue 480–487 participates in GTP binding; it reads GHVDHGKT. The tract at residues 505-509 is G2; it reads GITQH. The interval 526-529 is G3; that stretch reads DTPG. GTP contacts are provided by residues 526–530 and 580–583; these read DTPGH and NKID. Positions 580-583 are G4; sequence NKID. Residues 616 to 618 are G5; that stretch reads SAK.

The protein belongs to the TRAFAC class translation factor GTPase superfamily. Classic translation factor GTPase family. IF-2 subfamily.

The protein localises to the cytoplasm. Functionally, one of the essential components for the initiation of protein synthesis. Protects formylmethionyl-tRNA from spontaneous hydrolysis and promotes its binding to the 30S ribosomal subunits. Also involved in the hydrolysis of GTP during the formation of the 70S ribosomal complex. In Burkholderia ambifaria (strain ATCC BAA-244 / DSM 16087 / CCUG 44356 / LMG 19182 / AMMD) (Burkholderia cepacia (strain AMMD)), this protein is Translation initiation factor IF-2.